Reading from the N-terminus, the 167-residue chain is S-ribosylhomocysteine lyase (167 aa).

Fe cation is bound by residues His-54, His-58, and Cys-128.

The protein belongs to the LuxS family. As to quaternary structure, homodimer. Requires Fe cation as cofactor.

The catalysed reaction is S-(5-deoxy-D-ribos-5-yl)-L-homocysteine = (S)-4,5-dihydroxypentane-2,3-dione + L-homocysteine. Its function is as follows. Involved in the synthesis of autoinducer 2 (AI-2) which is secreted by bacteria and is used to communicate both the cell density and the metabolic potential of the environment. The regulation of gene expression in response to changes in cell density is called quorum sensing. Catalyzes the transformation of S-ribosylhomocysteine (RHC) to homocysteine (HC) and 4,5-dihydroxy-2,3-pentadione (DPD). In Sulfurimonas denitrificans (strain ATCC 33889 / DSM 1251) (Thiomicrospira denitrificans (strain ATCC 33889 / DSM 1251)), this protein is S-ribosylhomocysteine lyase.